The chain runs to 548 residues: MTSVTDRSAHSAERSTEHTIDIHTTAGKLAELHKRREESLHPVGEDAVEKVHAKGKLTARERIYALLDEDSFVELDALAKHRSTNFNLGEKRPLGDGVVTGYGTIDGRDVCIFSQDATVFGGSLGEVYGEKIVKVQELAIKTGRPLIGINDGAGARIQEGVVSLGLYSRIFRNNILASGVIPQISLIMGAAAGGHVYSPALTDFVIMVDQTSQMFITGPDVIKTVTGEEVTMEELGGAHTHMAKSGTAHYAASGEQDAFDYVRELLSYLPPNNSTDAPRYQAAAPTGPIEENLTDEDLELDTLIPDSPNQPYDMHEVITRLLDDEFLEIQAGYAQNIVVGFGRIDGRPVGIVANQPTHFAGCLDINASEKAARFVRTCDCFNIPIVMLVDVPGFLPGTDQEYNGIIRRGAKLLYAYGEATVPKITVITRKAYGGAYCVMGSKDMGCDVNLAWPTAQIAVMGASGAVGFVYRQQLAEAAANGEDIDKLRLRLQQEYEDTLVNPYVAAERGYVDAVIPPSHTRGYIGTALRLLERKIAQLPPKKHGNVPL.

The segment at 1 to 23 is disordered; that stretch reads MTSVTDRSAHSAERSTEHTIDIH. Basic and acidic residues predominate over residues 7–21; sequence RSAHSAERSTEHTID. Positions 25-281 constitute a CoA carboxyltransferase N-terminal domain; sequence TAGKLAELHK…NNSTDAPRYQ (257 aa). The region spanning 295 to 541 is the CoA carboxyltransferase C-terminal domain; that stretch reads DEDLELDTLI…ERKIAQLPPK (247 aa).

The protein belongs to the AccD/PCCB family. As to quaternary structure, forms homohexamers. The biotin-dependent acyl-CoA carboxylase complex is composed of AccA3, which contains the biotin carboxylase (BC) and biotin carboxyl carrier protein (BCCP) domains, and AccD5, which contains the carboxyl transferase (CT) domain. The AccA3/AccD5 complex forms a dodecamer, and can associate with the epsilon subunit AccE5 (Rv3280), which stimulates carboxylation by the complex. Is also part of the long-chain acyl-CoA carboxylase (LCC) complex, which is composed of AccA3, AccD4, AccD5 and AccE5. The four subunits are essential for activity, but AccD5, together with AccE5, probably plays a structural role rather than a catalytic one.

The enzyme catalyses N(6)-carboxybiotinyl-L-lysyl-[protein] + acetyl-CoA = N(6)-biotinyl-L-lysyl-[protein] + malonyl-CoA. The catalysed reaction is N(6)-carboxybiotinyl-L-lysyl-[protein] + propanoyl-CoA = methylmalonyl-CoA + N(6)-biotinyl-L-lysyl-[protein]. The protein operates within lipid metabolism; mycolic acid biosynthesis. Its activity is regulated as follows. Carboxylase activity of the AccA3/AccD5 complex is stimulated by interaction with AccE5. Its function is as follows. Component of a biotin-dependent acyl-CoA carboxylase complex. This subunit transfers the CO2 from carboxybiotin to the CoA ester substrate. When associated with the alpha3 subunit AccA3, is involved in the carboxylation of acetyl-CoA and propionyl-CoA, with a preference for propionyl-CoA. Is also required for the activity of the long-chain acyl-CoA carboxylase (LCC) complex. The protein is Biotin-dependent acetyl-/propionyl-coenzyme A carboxylase beta5 subunit of Mycobacterium tuberculosis (strain ATCC 25618 / H37Rv).